We begin with the raw amino-acid sequence, 101 residues long: ATP synthase subunit c (101 aa).

2 helical membrane passes run 31 to 51 (AFAY…GAGQ) and 81 to 101 (AISE…IFVG).

Belongs to the ATPase C chain family. F-type ATPases have 2 components, F(1) - the catalytic core - and F(0) - the membrane proton channel. F(1) has five subunits: alpha(3), beta(3), gamma(1), delta(1), epsilon(1). F(0) has three main subunits: a(1), b(2) and c(10-14). The alpha and beta chains form an alternating ring which encloses part of the gamma chain. F(1) is attached to F(0) by a central stalk formed by the gamma and epsilon chains, while a peripheral stalk is formed by the delta and b chains.

Its subcellular location is the cell membrane. F(1)F(0) ATP synthase produces ATP from ADP in the presence of a proton or sodium gradient. F-type ATPases consist of two structural domains, F(1) containing the extramembraneous catalytic core and F(0) containing the membrane proton channel, linked together by a central stalk and a peripheral stalk. During catalysis, ATP synthesis in the catalytic domain of F(1) is coupled via a rotary mechanism of the central stalk subunits to proton translocation. Functionally, key component of the F(0) channel; it plays a direct role in translocation across the membrane. A homomeric c-ring of between 10-14 subunits forms the central stalk rotor element with the F(1) delta and epsilon subunits. This Mesomycoplasma hyopneumoniae (strain J / ATCC 25934 / NCTC 10110) (Mycoplasma hyopneumoniae) protein is ATP synthase subunit c.